The sequence spans 229 residues: Ribonuclease HII (229 aa).

An RNase H type-2 domain is found at 34–225; it reads GPVAGVDEAG…VKAAHDQWLQ (192 aa). A divalent metal cation-binding residues include D40, E41, and D134.

The protein belongs to the RNase HII family. Mn(2+) serves as cofactor. Requires Mg(2+) as cofactor.

The protein localises to the cytoplasm. The enzyme catalyses Endonucleolytic cleavage to 5'-phosphomonoester.. In terms of biological role, endonuclease that specifically degrades the RNA of RNA-DNA hybrids. This chain is Ribonuclease HII, found in Corynebacterium diphtheriae (strain ATCC 700971 / NCTC 13129 / Biotype gravis).